The primary structure comprises 94 residues: Protein LURE 1.1 (94 aa).

The first 19 residues, 1–19 (MKLIFIFLTLLIFVSSCTS), serve as a signal peptide directing secretion. 3 cysteine pairs are disulfide-bonded: Cys58–Cys75, Cys61–Cys82, and Cys65–Cys84. The tract at residues 67–87 (RRDRYIRTCSFERKLCRCSYS) is PRK6 binding.

The protein belongs to the DEFL family. In terms of assembly, binds to PRK6 LRRs. Expressed in the pistil. Detected exclusively in the synergid cells.

It localises to the secreted. In terms of biological role, pollen tube attractants guiding pollen tubes to the ovular micropyle. This is Protein LURE 1.1 from Arabidopsis thaliana (Mouse-ear cress).